The sequence spans 456 residues: Glycosyl hydrolase family 109 protein 2 (456 aa).

A signal peptide (tat-type signal) is located at residues 1 to 33 (MSGFDRRSFLKASMVTAAATALAACASSERATG). Residues 63–64 (ER), D85, 134–137 (WAWH), 154–155 (EV), and N183 each bind NAD(+). Substrate contacts are provided by residues Y212, R231, 243–246 (YPTH), and Y325. Residue Y243 participates in NAD(+) binding.

It belongs to the Gfo/Idh/MocA family. Glycosyl hydrolase 109 subfamily. NAD(+) is required as a cofactor. In terms of processing, predicted to be exported by the Tat system. The position of the signal peptide cleavage has not been experimentally proven.

Functionally, glycosidase. This is Glycosyl hydrolase family 109 protein 2 from Shewanella sp. (strain ANA-3).